The following is a 398-amino-acid chain: LIM/homeobox protein Lhx3 (398 aa).

2 LIM zinc-binding domains span residues 28–78 (CAGC…CKDD) and 87–141 (CAAC…CKAD). Residues 154–213 (AKRPRTTITAKQLETLKNAYNNSPKPARHVREQLSTETGLDMRVVQVWFQNRRAKEKRLK) constitute a DNA-binding region (homeobox). 2 disordered regions span residues 208–294 (KEKR…FPLE) and 307–398 (DIQA…HAQF). Low complexity predominate over residues 272–282 (SSLSESSPALS).

The protein localises to the nucleus. Its function is as follows. Transcription factor. The chain is LIM/homeobox protein Lhx3 (lhx3) from Danio rerio (Zebrafish).